The primary structure comprises 350 residues: MAMRQTPLTCSGHTRPVVDLAFSGITPYGYFLISACKDGKPMLRQGDTGDWIGTFLGHKGAVWGATLNKDATKAATAAADFTAKVWDAVSGDELMTLAHKHIVKTVDFTQDSNYLLTGGQDKLLRIYDLNKPEAEPKEISGHTSGIKKALWCSEDKQILSADDKTVRLWDHATMTEVKSLNFNMSVSSMEYIPEGEILVITYGRSIAFHSAVSLEPIKSFEAPATINSASLHPEKEFLVAGGEDFKLYKYDYNSGEELESYKGHFGPIHCVRFSPDGELYASGSEDGTLRLWQTVVGKTYGLWKCVLPEEDSGELAKPKIGFPETAEEELEEIASENSDSIYSSTPEVKA.

WD repeat units follow at residues 12-56, 57-96, 98-137, 141-179, 180-212, 221-262, and 263-302; these read GHTR…GTFL, GHKG…ELMT, AHKH…AEPK, GHTS…EVKS, LNFN…HSAV, EAPA…ESYK, and GHFG…TYGL. Ser-312, Ser-335, and Ser-338 each carry phosphoserine. A disordered region spans residues 326 to 350; sequence AEEELEEIASENSDSIYSSTPEVKA. The span at 337 to 350 shows a compositional bias: polar residues; the sequence is NSDSIYSSTPEVKA. Tyr-342 carries the post-translational modification Phosphotyrosine.

This sequence belongs to the WD repeat STRAP family. As to quaternary structure, part of the core SMN complex that contains SMN1, GEMIN2/SIP1, DDX20/GEMIN3, GEMIN4, GEMIN5, GEMIN6, GEMIN7, GEMIN8 and STRAP/UNRIP. Part of the SMN-Sm complex that contains SMN1, GEMIN2/SIP1, DDX20/GEMIN3, GEMIN4, GEMIN5, GEMIN6, GEMIN7, GEMIN8, STRAP/UNRIP and the Sm proteins SNRPB, SNRPD1, SNRPD2, SNRPD3, SNRPE, SNRPF and SNRPG. Interacts directly with GEMIN6 and GEMIN7. Associates with the SMN complex in the cytoplasm but not in the nucleus. Also interacts with CSDE1/UNR and MAWBP. Interacts with PDPK1. Interacts with TRIM48.

It is found in the cytoplasm. The protein localises to the nucleus. Its function is as follows. The SMN complex catalyzes the assembly of small nuclear ribonucleoproteins (snRNPs), the building blocks of the spliceosome, and thereby plays an important role in the splicing of cellular pre-mRNAs. Most spliceosomal snRNPs contain a common set of Sm proteins SNRPB, SNRPD1, SNRPD2, SNRPD3, SNRPE, SNRPF and SNRPG that assemble in a heptameric protein ring on the Sm site of the small nuclear RNA to form the core snRNP (Sm core). In the cytosol, the Sm proteins SNRPD1, SNRPD2, SNRPE, SNRPF and SNRPG are trapped in an inactive 6S pICln-Sm complex by the chaperone CLNS1A that controls the assembly of the core snRNP. To assemble core snRNPs, the SMN complex accepts the trapped 5Sm proteins from CLNS1A forming an intermediate. Binding of snRNA inside 5Sm triggers eviction of the SMN complex, thereby allowing binding of SNRPD3 and SNRPB to complete assembly of the core snRNP. STRAP plays a role in the cellular distribution of the SMN complex. Negatively regulates TGF-beta signaling but positively regulates the PDPK1 kinase activity by enhancing its autophosphorylation and by significantly reducing the association of PDPK1 with 14-3-3 protein. The chain is Serine-threonine kinase receptor-associated protein (Strap) from Rattus norvegicus (Rat).